The primary structure comprises 201 residues: Probable quinol oxidase subunit 3 (201 aa).

Helical transmembrane passes span 20–40 (LGFWIFLTAEFALFGTLFATL), 62–82 (LILIMTFALLISSYTCGIAIY), 91–111 (LMMFWMIITVILGLVFVGFEI), 133–153 (FFILLGTHGAHVSLGIVWVIC), and 172–192 (FIVSLYWHFLDVVWVFIFTAV).

Belongs to the cytochrome c oxidase subunit 3 family.

The protein localises to the cell membrane. It carries out the reaction 2 a quinol + O2 = 2 a quinone + 2 H2O. Its function is as follows. Catalyzes quinol oxidation with the concomitant reduction of oxygen to water. The polypeptide is Probable quinol oxidase subunit 3 (qoxC) (Staphylococcus epidermidis (strain ATCC 35984 / DSM 28319 / BCRC 17069 / CCUG 31568 / BM 3577 / RP62A)).